The chain runs to 416 residues: 3-isopropylmalate dehydratase large subunit (416 aa).

Residues Cys297, Cys357, and Cys360 each contribute to the [4Fe-4S] cluster site.

The protein belongs to the aconitase/IPM isomerase family. LeuC type 2 subfamily. Heterodimer of LeuC and LeuD. Requires [4Fe-4S] cluster as cofactor.

The enzyme catalyses (2R,3S)-3-isopropylmalate = (2S)-2-isopropylmalate. It functions in the pathway amino-acid biosynthesis; L-leucine biosynthesis; L-leucine from 3-methyl-2-oxobutanoate: step 2/4. Functionally, catalyzes the isomerization between 2-isopropylmalate and 3-isopropylmalate, via the formation of 2-isopropylmaleate. This chain is 3-isopropylmalate dehydratase large subunit, found in Methanoregula boonei (strain DSM 21154 / JCM 14090 / 6A8).